The primary structure comprises 550 residues: U-box domain-containing protein 40 (550 aa).

Over residues 19 to 29 the composition is skewed to basic and acidic residues; that stretch reads KSDNLSRRESL. The tract at residues 19–55 is disordered; it reads KSDNLSRRESLAGKSKWRTSLSRSSSSSSSNNNSPTK. Low complexity predominate over residues 38 to 52; the sequence is SLSRSSSSSSSNNNS. Positions 57 to 127 constitute a U-box domain; it reads EIPAEFLCPI…HSWCERRCFP (71 aa). 5 ARM repeats span residues 260–299, 301–340, 342–381, 383–420, and 422–464; these read ESSR…NLSL, KSNK…SLAL, DENK…HLSL, QSNR…NMAS, and PVSR…GLSH.

It catalyses the reaction S-ubiquitinyl-[E2 ubiquitin-conjugating enzyme]-L-cysteine + [acceptor protein]-L-lysine = [E2 ubiquitin-conjugating enzyme]-L-cysteine + N(6)-ubiquitinyl-[acceptor protein]-L-lysine.. It participates in protein modification; protein ubiquitination. Functionally, functions as an E3 ubiquitin ligase. This Arabidopsis thaliana (Mouse-ear cress) protein is U-box domain-containing protein 40 (PUB40).